The sequence spans 186 residues: Ribosome-recycling factor (186 aa).

The protein belongs to the RRF family.

The protein localises to the cytoplasm. Responsible for the release of ribosomes from messenger RNA at the termination of protein biosynthesis. May increase the efficiency of translation by recycling ribosomes from one round of translation to another. In Rickettsia conorii (strain ATCC VR-613 / Malish 7), this protein is Ribosome-recycling factor.